Consider the following 463-residue polypeptide: RuvB-like 2 (463 aa).

Alanine 2 carries the post-translational modification N-acetylalanine. A Glycyl lysine isopeptide (Lys-Gly) (interchain with G-Cter in SUMO2) cross-link involves residue lysine 9. An ATP-binding site is contributed by 77 to 84 (GQPGTGKT). Serine 437 carries the post-translational modification Phosphoserine. Glycyl lysine isopeptide (Lys-Gly) (interchain with G-Cter in SUMO2) cross-links involve residues lysine 444 and lysine 456.

Belongs to the RuvB family. As to quaternary structure, forms homohexameric rings. Can form a dodecamer with RUVBL1 made of two stacked hexameric rings; however, even though RUVBL1 and RUVBL2 are present in equimolar ratio, the oligomeric status of each hexamer is not known. Oligomerization may regulate binding to nucleic acids and conversely, binding to nucleic acids may affect the dodecameric assembly. Interaction of the complex with DHX34 results in conformational changes of the N-terminus of the RUVBL2 subunits, resulting in loss of nucleotide binding ability and ATP hydrolysis of the complex. Interacts with the transcriptional activation domain of MYC. Interacts with ATF2. Component of the RNA polymerase II holoenzyme complex. May also act to bridge the LEF1/TCF1-CTNNB1 complex and TBP. Component of the NuA4 histone acetyltransferase complex which contains the catalytic subunit KAT5/TIP60 and the subunits EP400, TRRAP/PAF400, BRD8/SMAP, EPC1, DMAP1/DNMAP1, RUVBL1/TIP49, RUVBL2, ING3, actin, ACTL6A/BAF53A, MORF4L1/MRG15, MORF4L2/MRGX, MRGBP, YEATS4/GAS41, VPS72/YL1 and MEAF6. The NuA4 complex interacts with MYC and the adenovirus E1A protein. RUVBL2 interacts with EP400. Component of a NuA4-related complex which contains EP400, TRRAP/PAF400, SRCAP, BRD8/SMAP, EPC1, DMAP1/DNMAP1, RUVBL1/TIP49, RUVBL2, actin, ACTL6A/BAF53A, VPS72 and YEATS4/GAS41. Interacts with NPAT. Component of the chromatin-remodeling INO80 complex; specifically part of a complex module associated with the helicase ATP-binding and the helicase C-terminal domain of INO80. Component of some MLL1/MLL complex, at least composed of the core components KMT2A/MLL1, ASH2L, HCFC1/HCF1, WDR5 and RBBP5, as well as the facultative components BACC1, CHD8, E2F6, HSP70, INO80C, KANSL1, LAS1L, MAX, MCRS1, MGA, MYST1/MOF, PELP1, PHF20, PRP31, RING2, RUVB1/TIP49A, RUVB2/TIP49B, SENP3, TAF1, TAF4, TAF6, TAF7, TAF9 and TEX10. Interacts with IGHMBP2. Interacts with TELO2. Interacts with HINT1. Component of a SWR1-like complex. Component of the R2TP complex composed at least of RUVBL1, RUVBL2, RPAP3 and PIHD1. Component of the PAQosome complex which is responsible for the biogenesis of several protein complexes and which consists of R2TP complex members RUVBL1, RUVBL2, RPAP3 and PIH1D1, URI complex members PFDN2, PFDN6, PDRG1, UXT and URI1 as well as ASDURF, POLR2E and DNAAF10/WDR92. Interacts with ITFG1. Interacts with ZMYND10. Interacts with WAC; WAC positively regulates MTOR activity by promoting the assembly of the TTT complex composed of TELO2, TTI1 and TTI2 and the RUVBL complex composed of RUVBL1 and RUVBL2 into the TTT-RUVBL complex which leads to the dimerization of the mTORC1 complex and its subsequent activation. Forms a complex with APPL1 and APPL2. Interacts with ZNHIT2 (via HIT-type zinc finger) in the presence of ATP or ADP; shows a stronger interaction in the presence of ADP. The RUVBL1/RUVBL2 complex interacts with ZNHIT1 (via HIT-type zinc finger), ZNHIT3 (via HIT-type zinc finger), ZNHIT6 (via HIT-type zinc finger) and DDX59/ZNHIT5 (via HIT-type zinc finger) in the presence of ADP. Interacts with NOPCHAP1; the interaction is direct and disrupted upon ATP binding. Interacts with SMG1. (Microbial infection) Interacts with Mumps L polymerase; this interaction regulates the viral transcription. In terms of tissue distribution, ubiquitously expressed. Highly expressed in testis and thymus.

It is found in the nucleus matrix. It localises to the nucleus. The protein localises to the nucleoplasm. The protein resides in the cytoplasm. Its subcellular location is the membrane. It is found in the dynein axonemal particle. The catalysed reaction is ATP + H2O = ADP + phosphate + H(+). In terms of biological role, possesses single-stranded DNA-stimulated ATPase and ATP-dependent DNA helicase (5' to 3') activity; hexamerization is thought to be critical for ATP hydrolysis and adjacent subunits in the ring-like structure contribute to the ATPase activity. Component of the NuA4 histone acetyltransferase complex which is involved in transcriptional activation of select genes principally by acetylation of nucleosomal histones H4 and H2A. This modification may both alter nucleosome -DNA interactions and promote interaction of the modified histones with other proteins which positively regulate transcription. This complex may be required for the activation of transcriptional programs associated with oncogene and proto-oncogene mediated growth induction, tumor suppressor mediated growth arrest and replicative senescence, apoptosis, and DNA repair. The NuA4 complex ATPase and helicase activities seem to be, at least in part, contributed by the association of RUVBL1 and RUVBL2 with EP400. NuA4 may also play a direct role in DNA repair when recruited to sites of DNA damage. Component of a SWR1-like complex that specifically mediates the removal of histone H2A.Z/H2AZ1 from the nucleosome. Proposed core component of the chromatin remodeling INO80 complex which exhibits DNA- and nucleosome-activated ATPase activity and catalyzes ATP-dependent nucleosome sliding. Plays an essential role in oncogenic transformation by MYC and also modulates transcriptional activation by the LEF1/TCF1-CTNNB1 complex. May also inhibit the transcriptional activity of ATF2. Involved in the endoplasmic reticulum (ER)-associated degradation (ERAD) pathway where it negatively regulates expression of ER stress response genes. May play a role in regulating the composition of the U5 snRNP complex. The sequence is that of RuvB-like 2 (RUVBL2) from Homo sapiens (Human).